The chain runs to 202 residues: Small ribosomal subunit protein uS5 (202 aa).

Positions 50 to 113 constitute an S5 DRBM domain; that stretch reads LKQELLNLNL…REAKLNITPV (64 aa).

It belongs to the universal ribosomal protein uS5 family. Part of the 30S ribosomal subunit. Contacts protein S4.

With S4 and S12 plays an important role in translational accuracy. The chain is Small ribosomal subunit protein uS5 from Pyrobaculum calidifontis (strain DSM 21063 / JCM 11548 / VA1).